The primary structure comprises 635 residues: Chaperone protein HtpG (635 aa).

The a; substrate-binding stretch occupies residues 1–346 (MSQTTTNSAS…SADLPLNVSR (346 aa)). The interval 347–563 (EILQESRDVR…QNELSPHLLR (217 aa)) is b. The interval 564–635 (MLKAAGQEAP…KRLNGLLLKA (72 aa)) is c.

The protein belongs to the heat shock protein 90 family. As to quaternary structure, homodimer.

The protein resides in the cytoplasm. In terms of biological role, molecular chaperone. Has ATPase activity. The protein is Chaperone protein HtpG of Bordetella parapertussis (strain 12822 / ATCC BAA-587 / NCTC 13253).